The primary structure comprises 641 residues: Chaperone protein DnaK (641 aa).

Phosphothreonine; by autocatalysis is present on Thr199. Residues 577 to 590 are compositionally biased toward basic and acidic residues; that stretch reads KGDNKDEIETRTQK. A disordered region spans residues 577 to 641; the sequence is KGDNKDEIET…EFEEVDDKKK (65 aa). Residues 617–626 are compositionally biased toward low complexity; it reads GAEQASAQQD. The span at 627–641 shows a compositional bias: acidic residues; the sequence is DVVDAEFEEVDDKKK.

Belongs to the heat shock protein 70 family.

In terms of biological role, acts as a chaperone. This chain is Chaperone protein DnaK, found in Thioalkalivibrio sulfidiphilus (strain HL-EbGR7).